The primary structure comprises 486 residues: MPRKANLLKSLARGRVRTSFNKYNLFNLYKKGGVDLKSKSLYQQKWTAKQETRAYHGEHLTEKRWQTVFKPKLDSVAQLDASLRGGEIKETPFLLQTFAVLEKRLDFALFRAMFASSVRQARQFILHGNVRVNGVKIKHPSYTLKPGDMFSVKPDKVLEALGAKKPSFQEALKIDKTQIVLWNKYVKEAKTEPKEVWEKKLENFEKMSDSNPKKLQFQEFLRQYNKNLESQQYNALKGCTQEGILRKLLNVEKEIGKSNNEPLSIDELKQGLPEIQDSQLLESLNNAYQEFFKSGEIRREIISKCQPDELISLATEMMNPNETTKKELSDGAKSALRSGKRIIAESVKLWTKNITDHFKTRMSDISDGSLTFDPKWAKNLKYHDPIKLSELEGDEPKARKLINLPWQKNYVYGRQDPKKPFFTPWKPRPFLSPFAILPHHLEISFKTCHAVYLRDPVARPGQSEVISPFDVPVHERAYMYYLRNGK.

The S4 RNA-binding domain maps to 103-172 (KRLDFALFRA…AKKPSFQEAL (70 aa)).

This sequence belongs to the universal ribosomal protein uS4 family. As to quaternary structure, component of the mitochondrial small ribosomal subunit (mt-SSU). Mature yeast 74S mitochondrial ribosomes consist of a small (37S) and a large (54S) subunit. The 37S small subunit contains a 15S ribosomal RNA (15S mt-rRNA) and 34 different proteins. The 54S large subunit contains a 21S rRNA (21S mt-rRNA) and 46 different proteins. uS3m, uS4m and uS5m form the narrow entry site of the mRNA channel.

It localises to the mitochondrion. Its function is as follows. Component of the mitochondrial ribosome (mitoribosome), a dedicated translation machinery responsible for the synthesis of mitochondrial genome-encoded proteins, including at least some of the essential transmembrane subunits of the mitochondrial respiratory chain. The mitoribosomes are attached to the mitochondrial inner membrane and translation products are cotranslationally integrated into the membrane. The polypeptide is Small ribosomal subunit protein uS4m (NAM9) (Saccharomyces cerevisiae (strain ATCC 204508 / S288c) (Baker's yeast)).